The chain runs to 631 residues: Glutamine--fructose-6-phosphate aminotransferase [isomerizing] (631 aa).

The Nucleophile; for GATase activity role is filled by C2. The 224-residue stretch at C2–L225 folds into the Glutamine amidotransferase type-2 domain. SIS domains are found at residues L298 to S446 and L480 to P621. K626 (for Fru-6P isomerization activity) is an active-site residue.

Homodimer.

It is found in the cytoplasm. The catalysed reaction is D-fructose 6-phosphate + L-glutamine = D-glucosamine 6-phosphate + L-glutamate. Catalyzes the first step in hexosamine metabolism, converting fructose-6P into glucosamine-6P using glutamine as a nitrogen source. This is Glutamine--fructose-6-phosphate aminotransferase [isomerizing] from Synechocystis sp. (strain ATCC 27184 / PCC 6803 / Kazusa).